Consider the following 1294-residue polypeptide: Unconventional myosin-VI (1294 aa).

Residues 2-53 (EDGKPVWAPHPTDGFQMGNIVDIGPDSLTIEPLNQKGKTFLALINQVFPAEE) enclose the Myosin N-terminal SH3-like domain. The Myosin motor domain occupies 57-771 (KDVEDNCSLM…KFAEFDQIMK (715 aa)). 151–158 (GESGAGKT) provides a ligand contact to ATP. Serine 267 is modified (phosphoserine). Residues 273–317 (YLNRGCTRYFANKETDKQILQNRKSPEYLKAGSMKDPLLDDHGDF) are responsible for slow ATPase activity. The residue at position 405 (threonine 405) is a Phosphothreonine. At serine 604 the chain carries Phosphoserine. The interval 665-672 (FIRCIKPN) is actin-binding. Positions 782 to 810 (KRVNHWLTCSRWKKVQWCSLSVIKLKNKI) are required for binding calmodulin. The 21-residue stretch at 814–834 (AEACIKMQKTIRMWLCKRRHK) folds into the IQ domain. The interval 835–916 (PRIDGLVKVG…EELLSALQKK (82 aa)) is three-helix bundle. The SAH stretch occupies residues 917 to 984 (KQQEEEAERL…EDDEKRIQAE (68 aa)). Residues 934–955 (EKERKRREEDEKRRRKEEEERR) are disordered. Serine 1025 is subject to Phosphoserine. The interval 1060–1285 (KEMSEFLSRG…ESRQARPTYA (226 aa)) is interaction with TAX1BP1 and CALCOCO2/NDP52. An interaction with OPTN region spans residues 1116-1118 (RRL). Serine 1155 is subject to Phosphoserine. The interaction with TOM1 stretch occupies residues 1157 to 1285 (QQNPAAQIPA…ESRQARPTYA (129 aa)).

This sequence belongs to the TRAFAC class myosin-kinesin ATPase superfamily. Myosin family. In terms of assembly, homodimer; dimerization seems to implicate the unfolding of the three-helix bundle region creating an additional calmodulin binding site, and cargo binding. Able to function as a monomer under specific conditions in vitro. Forms a complex with CFTR and DAB2 in the apical membrane of epithelial cells. Component of the DISP/DOCK7-induced septin displacement complex, at least composed of DOCK7, LRCH3 and MYO6. Binding to calmodulin through a unique insert, not found in other myosins, located in the neck region between the motor domain and the IQ domain appears to contribute to the directionality reversal. This interaction occurs only if the C-terminal lobe of calmodulin is occupied by calcium. Interaction with F-actin/ACTN1 occurs only at the apical brush border domain of the proximal tubule cells. Interacts with DAB2. In vitro, the C-terminal globular tail binds a C-terminal region of DAB2. Interacts with CFTR. Interacts with CABP5. Interacts with TOM1. Interacts with OPTN. Interacts with TAX1BP1 and CALCOCO2/NDP52. Interacts with TOM1L2. Interacts with CLIC5; may work together in a complex which also includes RDX and MYO6 to stabilize linkages between the plasma membrane and subjacent actin cytoskeleton at the base of stereocilia. Phosphorylation in the motor domain, induced by EGF, results in translocation of MYO6 from the cell surface to membrane ruffles and affects F-actin dynamics. Phosphorylated in vitro by p21-activated kinase (PAK). In terms of tissue distribution, expressed in most tissues examined including heart, brain, placenta, pancreas, spleen, thymus, prostate, testis, ovary, small intestine and colon. Highest levels in brain, pancreas, testis and small intestine. Also expressed in fetal brain and cochlea. Isoform 1 and isoform 2, containing the small insert, and isoform 4, containing neither insert, are expressed in unpolarized epithelial cells.

Its subcellular location is the golgi apparatus. It localises to the trans-Golgi network membrane. The protein localises to the nucleus. The protein resides in the cytoplasm. It is found in the perinuclear region. Its subcellular location is the membrane. It localises to the clathrin-coated pit. The protein localises to the cytoplasmic vesicle. The protein resides in the clathrin-coated vesicle. It is found in the cell projection. Its subcellular location is the filopodium. It localises to the ruffle membrane. The protein localises to the microvillus. The protein resides in the cytosol. It is found in the autophagosome. Its subcellular location is the endosome. It localises to the clathrin-coated vesicle membrane. Its function is as follows. Myosins are actin-based motor molecules with ATPase activity. Unconventional myosins serve in intracellular movements. Myosin 6 is a reverse-direction motor protein that moves towards the minus-end of actin filaments. Has slow rate of actin-activated ADP release due to weak ATP binding. Functions in a variety of intracellular processes such as vesicular membrane trafficking and cell migration. Required for the structural integrity of the Golgi apparatus via the p53-dependent pro-survival pathway. Appears to be involved in a very early step of clathrin-mediated endocytosis in polarized epithelial cells. Together with TOM1, mediates delivery of endocytic cargo to autophagosomes thereby promoting autophagosome maturation and driving fusion with lysosomes. Links TOM1 with autophagy receptors, such as TAX1BP1; CALCOCO2/NDP52 and OPTN. May act as a regulator of F-actin dynamics. As part of the DISP complex, may regulate the association of septins with actin and thereby regulate the actin cytoskeleton. May play a role in transporting DAB2 from the plasma membrane to specific cellular targets. May play a role in the extension and network organization of neurites. Required for structural integrity of inner ear hair cells. Required for the correct localization of CLIC5 and RDX at the stereocilium base. Modulates RNA polymerase II-dependent transcription. This chain is Unconventional myosin-VI, found in Homo sapiens (Human).